The primary structure comprises 373 residues: tRNA (guanine(26)-N(2))-dimethyltransferase (373 aa).

Residues 2–365 enclose the Trm1 methyltransferase domain; the sequence is KIISEGETKL…AELSDLVVLI (364 aa). Positions 35, 66, 86, 113, and 114 each coordinate S-adenosyl-L-methionine.

This sequence belongs to the class I-like SAM-binding methyltransferase superfamily. Trm1 family.

The catalysed reaction is guanosine(26) in tRNA + 2 S-adenosyl-L-methionine = N(2)-dimethylguanosine(26) in tRNA + 2 S-adenosyl-L-homocysteine + 2 H(+). Its function is as follows. Dimethylates a single guanine residue at position 26 of a number of tRNAs using S-adenosyl-L-methionine as donor of the methyl groups. This is tRNA (guanine(26)-N(2))-dimethyltransferase from Methanococcus maripaludis (strain C5 / ATCC BAA-1333).